The primary structure comprises 119 residues: Beta-2-microglobulin (119 aa).

An N-terminal signal peptide occupies residues 1–20; the sequence is MARFVVVALLVLLSLSGLEA. Residues 25–114 enclose the Ig-like C1-type domain; that stretch reads PKIQVYSRHP…VTLSTPKTVK (90 aa). Cysteine 45 and cysteine 100 form a disulfide bridge.

It belongs to the beta-2-microglobulin family. As to quaternary structure, heterodimer of an alpha chain and a beta chain. Beta-2-microglobulin is the beta-chain of major histocompatibility complex class I molecules.

The protein localises to the secreted. In terms of biological role, component of the class I major histocompatibility complex (MHC). Involved in the presentation of peptide antigens to the immune system. The polypeptide is Beta-2-microglobulin (B2M) (Aotus lemurinus (Gray-bellied night monkey)).